Consider the following 254-residue polypeptide: Alcohol dehydrogenase 1 (254 aa).

10–33 (FVAGLGGIGLDTSREIVKSGPKNL) lines the NAD(+) pocket. Ser138 lines the substrate pocket. The active-site Proton acceptor is Tyr151.

Belongs to the short-chain dehydrogenases/reductases (SDR) family. As to quaternary structure, homodimer.

It catalyses the reaction a primary alcohol + NAD(+) = an aldehyde + NADH + H(+). The catalysed reaction is a secondary alcohol + NAD(+) = a ketone + NADH + H(+). The chain is Alcohol dehydrogenase 1 (Adh1) from Drosophila hydei (Fruit fly).